The following is a 183-amino-acid chain: Potassium-transporting ATPase KdpC subunit (183 aa).

The chain crosses the membrane as a helical span at residues 10–30 (LTVFTLILFAVIYPLAIYGIA).

It belongs to the KdpC family. As to quaternary structure, the system is composed of three essential subunits: KdpA, KdpB and KdpC.

It is found in the cell inner membrane. Functionally, part of the high-affinity ATP-driven potassium transport (or Kdp) system, which catalyzes the hydrolysis of ATP coupled with the electrogenic transport of potassium into the cytoplasm. This subunit acts as a catalytic chaperone that increases the ATP-binding affinity of the ATP-hydrolyzing subunit KdpB by the formation of a transient KdpB/KdpC/ATP ternary complex. This chain is Potassium-transporting ATPase KdpC subunit, found in Flavobacterium johnsoniae (strain ATCC 17061 / DSM 2064 / JCM 8514 / BCRC 14874 / CCUG 350202 / NBRC 14942 / NCIMB 11054 / UW101) (Cytophaga johnsonae).